The primary structure comprises 463 residues: L-seryl-tRNA(Sec) selenium transferase (463 aa).

N6-(pyridoxal phosphate)lysine is present on lysine 294.

Belongs to the SelA family. Requires pyridoxal 5'-phosphate as cofactor.

Its subcellular location is the cytoplasm. The catalysed reaction is L-seryl-tRNA(Sec) + selenophosphate + H(+) = L-selenocysteinyl-tRNA(Sec) + phosphate. It functions in the pathway aminoacyl-tRNA biosynthesis; selenocysteinyl-tRNA(Sec) biosynthesis; selenocysteinyl-tRNA(Sec) from L-seryl-tRNA(Sec) (bacterial route): step 1/1. In terms of biological role, converts seryl-tRNA(Sec) to selenocysteinyl-tRNA(Sec) required for selenoprotein biosynthesis. This is L-seryl-tRNA(Sec) selenium transferase from Hyphomonas neptunium (strain ATCC 15444).